Consider the following 120-residue polypeptide: NAD(P)H-quinone oxidoreductase subunit 3 (120 aa).

3 helical membrane passes run 10–30, 64–84, and 89–109; these read FLGFLLIAAAVPVLALVTNLI, MFALVFVIFDVETVFLYPWAV, and LGLLAFIEALIFIAILVIALA.

It belongs to the complex I subunit 3 family. In terms of assembly, NDH-1 can be composed of about 15 different subunits; different subcomplexes with different compositions have been identified which probably have different functions.

Its subcellular location is the cellular thylakoid membrane. It carries out the reaction a plastoquinone + NADH + (n+1) H(+)(in) = a plastoquinol + NAD(+) + n H(+)(out). The enzyme catalyses a plastoquinone + NADPH + (n+1) H(+)(in) = a plastoquinol + NADP(+) + n H(+)(out). NDH-1 shuttles electrons from an unknown electron donor, via FMN and iron-sulfur (Fe-S) centers, to quinones in the respiratory and/or the photosynthetic chain. The immediate electron acceptor for the enzyme in this species is believed to be plastoquinone. Couples the redox reaction to proton translocation, and thus conserves the redox energy in a proton gradient. Cyanobacterial NDH-1 also plays a role in inorganic carbon-concentration. This is NAD(P)H-quinone oxidoreductase subunit 3 from Prochlorococcus marinus (strain MIT 9301).